A 108-amino-acid chain; its full sequence is DNA-directed RNA polymerase subunit omega (108 aa).

The interval M1–G32 is disordered.

Belongs to the RNA polymerase subunit omega family. As to quaternary structure, the RNAP catalytic core consists of 2 alpha, 1 beta, 1 beta' and 1 omega subunit. When a sigma factor is associated with the core the holoenzyme is formed, which can initiate transcription.

It carries out the reaction RNA(n) + a ribonucleoside 5'-triphosphate = RNA(n+1) + diphosphate. In terms of biological role, promotes RNA polymerase assembly. Latches the N- and C-terminal regions of the beta' subunit thereby facilitating its interaction with the beta and alpha subunits. This Mycobacterium avium (strain 104) protein is DNA-directed RNA polymerase subunit omega.